We begin with the raw amino-acid sequence, 230 residues long: Protein-L-isoaspartate O-methyltransferase (230 aa).

Ser68 is a catalytic residue.

This sequence belongs to the methyltransferase superfamily. L-isoaspartyl/D-aspartyl protein methyltransferase family.

Its subcellular location is the cytoplasm. The catalysed reaction is [protein]-L-isoaspartate + S-adenosyl-L-methionine = [protein]-L-isoaspartate alpha-methyl ester + S-adenosyl-L-homocysteine. Functionally, catalyzes the methyl esterification of L-isoaspartyl residues in peptides and proteins that result from spontaneous decomposition of normal L-aspartyl and L-asparaginyl residues. It plays a role in the repair and/or degradation of damaged proteins. The polypeptide is Protein-L-isoaspartate O-methyltransferase (Salinibacter ruber (strain DSM 13855 / M31)).